The chain runs to 259 residues: Hydroxyacylglutathione hydrolase (259 aa).

Zn(2+) is bound by residues histidine 56, histidine 58, aspartate 60, histidine 61, histidine 112, aspartate 133, and histidine 171. The disordered stretch occupies residues 220-243 (NPFLRTGETSVKEKADERSDAQNT). Over residues 229–239 (SVKEKADERSD) the composition is skewed to basic and acidic residues.

This sequence belongs to the metallo-beta-lactamase superfamily. Glyoxalase II family. Monomer. Zn(2+) serves as cofactor.

The enzyme catalyses an S-(2-hydroxyacyl)glutathione + H2O = a 2-hydroxy carboxylate + glutathione + H(+). It participates in secondary metabolite metabolism; methylglyoxal degradation; (R)-lactate from methylglyoxal: step 2/2. Its function is as follows. Thiolesterase that catalyzes the hydrolysis of S-D-lactoyl-glutathione to form glutathione and D-lactic acid. The chain is Hydroxyacylglutathione hydrolase from Pseudomonas syringae pv. syringae (strain B728a).